The sequence spans 498 residues: Lysine--tRNA ligase (498 aa).

Residues Glu-407 and Glu-414 each contribute to the Mg(2+) site.

This sequence belongs to the class-II aminoacyl-tRNA synthetase family. As to quaternary structure, homodimer. It depends on Mg(2+) as a cofactor.

It is found in the cytoplasm. It carries out the reaction tRNA(Lys) + L-lysine + ATP = L-lysyl-tRNA(Lys) + AMP + diphosphate. The protein is Lysine--tRNA ligase of Rhizobium etli (strain ATCC 51251 / DSM 11541 / JCM 21823 / NBRC 15573 / CFN 42).